The following is a 190-amino-acid chain: Potassium-transporting ATPase KdpC subunit (190 aa).

Residues 13 to 33 traverse the membrane as a helical segment; the sequence is VGFLLLTLVCGVVYPGIVTII.

It belongs to the KdpC family. As to quaternary structure, the system is composed of three essential subunits: KdpA, KdpB and KdpC.

It is found in the cell membrane. In terms of biological role, part of the high-affinity ATP-driven potassium transport (or Kdp) system, which catalyzes the hydrolysis of ATP coupled with the electrogenic transport of potassium into the cytoplasm. This subunit acts as a catalytic chaperone that increases the ATP-binding affinity of the ATP-hydrolyzing subunit KdpB by the formation of a transient KdpB/KdpC/ATP ternary complex. The sequence is that of Potassium-transporting ATPase KdpC subunit from Listeria welshimeri serovar 6b (strain ATCC 35897 / DSM 20650 / CCUG 15529 / CIP 8149 / NCTC 11857 / SLCC 5334 / V8).